Consider the following 201-residue polypeptide: Ras-related protein Rab-1B (201 aa).

Residue Met1 is modified to N-acetylmethionine. Residues Ser17, Gly18, Val19, Gly20, Lys21, Ser22, Cys23, Tyr33, Thr34, Glu35, Ser36, Ser39, and Thr40 each contribute to the GTP site. Ser22 is a Mg(2+) binding site. The Switch 1 signature appears at 30–45; the sequence is DDTYTESYISTIGVDF. The Mg(2+) site is built by Thr40 and Asp63. The switch 2 region; required for interaction with REP1/CHM stretch occupies residues 64 to 83; sequence TAGQERFRTVTSSYYRGAHG. The Switch 2 signature appears at 65–80; it reads AGQERFRTVTSSYYRG. GTP-binding residues include Gly66, Asn121, Lys122, Asp124, Ser151, Ala152, and Lys153. The tract at residues 173–201 is disordered; it reads MGPGAASGGERPNLKIDSTPVKSASGGCC. 2 S-geranylgeranyl cysteine lipidation sites follow: Cys200 and Cys201. Cys201 is modified (cysteine methyl ester).

This sequence belongs to the small GTPase superfamily. Rab family. In terms of assembly, interacts with MICAL1 and MICAL2. Interacts (in GTP-bound form) with MICALCL, MICAL1 and MILCAL3. Interacts with GDI1; the interaction requires the GDP-bound state. Interacts with CHM/REP1; the interaction requires the GDP-bound form and is necessary for prenylation by GGTase II. Interacts with RabGAP TBC1D20. Interacts (in GDP-bound form) with lipid phosphatase MTMR6 (via GRAM domain); the interaction regulates MTMR6 recruitment to the endoplasmic reticulum-Golgi intermediate compartment. Interacts (in GDP-bound form) with lipid phosphatase MTMR7. Mg(2+) serves as cofactor. Prenylated; by GGTase II, only after interaction of the substrate with Rab escort protein 1 (REP1).

It is found in the cytoplasm. The protein localises to the membrane. It localises to the preautophagosomal structure membrane. Its subcellular location is the perinuclear region. The catalysed reaction is GTP + H2O = GDP + phosphate + H(+). Its activity is regulated as follows. Regulated by guanine nucleotide exchange factors (GEFs) which promote the exchange of bound GDP for free GTP. Regulated by GTPase activating proteins (GAPs) including TBC1D20 which increases the GTP hydrolysis activity. Inhibited by GDP dissociation inhibitors (GDIs). Its function is as follows. The small GTPases Rab are key regulators of intracellular membrane trafficking, from the formation of transport vesicles to their fusion with membranes. Rabs cycle between an inactive GDP-bound form and an active GTP-bound form that is able to recruit to membranes different set of downstream effectors directly responsible for vesicle formation, movement, tethering and fusion. Plays a role in the initial events of the autophagic vacuole development which take place at specialized regions of the endoplasmic reticulum. Regulates vesicular transport between the endoplasmic reticulum and successive Golgi compartments. Required to modulate the compacted morphology of the Golgi. Promotes the recruitment of lipid phosphatase MTMR6 to the endoplasmic reticulum-Golgi intermediate compartment. The polypeptide is Ras-related protein Rab-1B (Rab1b) (Rattus norvegicus (Rat)).